The following is a 316-amino-acid chain: Acetylglutamate kinase (316 aa).

Substrate contacts are provided by residues 76–77, R98, and N207; that span reads GG.

Belongs to the acetylglutamate kinase family. ArgB subfamily.

It is found in the cytoplasm. It carries out the reaction N-acetyl-L-glutamate + ATP = N-acetyl-L-glutamyl 5-phosphate + ADP. It functions in the pathway amino-acid biosynthesis; L-arginine biosynthesis; N(2)-acetyl-L-ornithine from L-glutamate: step 2/4. Catalyzes the ATP-dependent phosphorylation of N-acetyl-L-glutamate. In Paenarthrobacter aurescens (strain TC1), this protein is Acetylglutamate kinase.